The sequence spans 345 residues: Phosphoribosylformylglycinamidine cyclo-ligase (345 aa).

It belongs to the AIR synthase family.

It localises to the cytoplasm. The enzyme catalyses 2-formamido-N(1)-(5-O-phospho-beta-D-ribosyl)acetamidine + ATP = 5-amino-1-(5-phospho-beta-D-ribosyl)imidazole + ADP + phosphate + H(+). It functions in the pathway purine metabolism; IMP biosynthesis via de novo pathway; 5-amino-1-(5-phospho-D-ribosyl)imidazole from N(2)-formyl-N(1)-(5-phospho-D-ribosyl)glycinamide: step 2/2. The protein is Phosphoribosylformylglycinamidine cyclo-ligase of Actinobacillus pleuropneumoniae serotype 5b (strain L20).